The sequence spans 381 residues: Succinyl-diaminopimelate desuccinylase (381 aa).

Residue histidine 72 participates in Zn(2+) binding. Aspartate 74 is a catalytic residue. Aspartate 105 contacts Zn(2+). The Proton acceptor role is filled by glutamate 139. 3 residues coordinate Zn(2+): glutamate 140, glutamate 168, and histidine 354.

This sequence belongs to the peptidase M20A family. DapE subfamily. As to quaternary structure, homodimer. Requires Zn(2+) as cofactor. The cofactor is Co(2+).

The catalysed reaction is N-succinyl-(2S,6S)-2,6-diaminopimelate + H2O = (2S,6S)-2,6-diaminopimelate + succinate. Its pathway is amino-acid biosynthesis; L-lysine biosynthesis via DAP pathway; LL-2,6-diaminopimelate from (S)-tetrahydrodipicolinate (succinylase route): step 3/3. Its function is as follows. Catalyzes the hydrolysis of N-succinyl-L,L-diaminopimelic acid (SDAP), forming succinate and LL-2,6-diaminopimelate (DAP), an intermediate involved in the bacterial biosynthesis of lysine and meso-diaminopimelic acid, an essential component of bacterial cell walls. This Shewanella sp. (strain ANA-3) protein is Succinyl-diaminopimelate desuccinylase.